Consider the following 60-residue polypeptide: Mastoparan-A (60 aa).

An N-terminal signal peptide occupies residues 1–27 (MKNTILILFTAFIALLGFFGMSAEALA). 4 AXPX repeats span residues 27–30 (ADPI), 31–34 (ADPL), 35–38 (AGPN), and 41–43 (ADP). The propeptide occupies 28–45 (DPIADPLAGPNAEADPEA). Isoleucine 59 carries the isoleucine amide modification.

The protein belongs to the MCD family. Mastoparan subfamily. Expressed by the venom gland.

It is found in the secreted. It localises to the target cell membrane. Antimicrobial and mast cell degranulating peptide. Has broad spectrum antibacterial activity against both Gram-positive and Gram-negative bacteria (S.aureus MIC=32-64 ug/ml, S.xylosus MIC=2 ug/ml, S.alactolyticus MIC=12 ug/ml, C.koseri MIC=4 ug/ml, E.coli MIC=8 ug/ml, K.pneumoniae MIC=32 ug/ml, P.aerugiosa MIC=192 ug/ml, S.choleraesuis MIC=32 ug/ml, S.typhimurium MIC=32 ug/ml, V.parahamelytics MIC=16 ug/ml). Affects membrane permeability of E.coli. Shows hemolytic activities on sheep, chicken and human erythrocytes. Its mast cell degranulation activity may be related to the activation of G-protein coupled receptors in mast cells as well as interaction with other proteins located in cell endosomal membranes in the mast cells. In Vespa analis (Yellow-vented hornet), this protein is Mastoparan-A.